The following is a 412-amino-acid chain: 5,5'-dehydrodivanillate O-demethylase ferredoxin reductase subunit (412 aa).

FAD contacts are provided by Ala14, Lys49, Val82, Arg130, Asp279, and Val298.

It belongs to the FAD-dependent oxidoreductase family. Monomer. The three-component monooxygenase is composed of an oxygenase (LigXa), a ferredoxin (LigXc) and a ferredoxin reductase (LigXd). FAD is required as a cofactor.

It catalyses the reaction 5,5'-dehydrodivanillate + NADH + O2 + H(+) = 2,2',3-trihydroxy-3'-methoxy-5,5'-dicarboxybiphenyl + formaldehyde + NAD(+) + H2O. Its function is as follows. Involved in the catabolism of 5,5'-dehydrodivanillate (DDVA), an intermediate in the biodegradation of lignin. Part of a three-component monooxygenase that catalyzes the O-demethylation of DDVA, leading to the formation of 2,2',3-trihydroxy-3'-methoxy-5,5'-dicarboxybiphenyl (OH-DDVA). LigXd probably transfers the electrons from NADH to LigXc. This is 5,5'-dehydrodivanillate O-demethylase ferredoxin reductase subunit from Sphingobium sp. (strain NBRC 103272 / SYK-6).